A 415-amino-acid polypeptide reads, in one-letter code: Actin-like protein 9 (415 aa).

Residues 1–22 are disordered; it reads MDVNGHPKFQPSPETDGPLPLT.

This sequence belongs to the actin family. In terms of assembly, interacts with ACTL7A.

It localises to the cytoplasmic vesicle. Its subcellular location is the secretory vesicle. The protein localises to the acrosome. The protein resides in the cytoplasm. It is found in the cytoskeleton. It localises to the perinuclear theca. Testis-specic protein that plays an important role in fusion of proacrosomal vesicles and perinuclear theca formation. The polypeptide is Actin-like protein 9 (Actl9) (Mus musculus (Mouse)).